A 224-amino-acid chain; its full sequence is uncharacterized protein (224 aa).

This is an uncharacterized protein from Saccharomyces cerevisiae (strain ATCC 204508 / S288c) (Baker's yeast).